Here is a 473-residue protein sequence, read N- to C-terminus: Zinc finger and SCAN domain-containing protein 21 (473 aa).

Lysine 27 participates in a covalent cross-link: Glycyl lysine isopeptide (Lys-Gly) (interchain with G-Cter in SUMO2). An SCAN box domain is found at 45 to 127 (RQRFRQFGYH…TLLEDLEREL (83 aa)). Residues 127–167 (LDEPGHQVSTPPNEQKPVWEKISSSGTAKESPSSMQPQPLE) form a disordered region. The segment covering 148 to 165 (ISSSGTAKESPSSMQPQP) has biased composition (polar residues). Glycyl lysine isopeptide (Lys-Gly) (interchain with G-Cter in SUMO2) cross-links involve residues lysine 221 and lysine 232. The disordered stretch occupies residues 244–272 (LENEKGTKPPLQEAGSKKGRESVPTKPTP). Residues 258–272 (GSKKGRESVPTKPTP) show a composition bias toward basic and acidic residues. 7 consecutive C2H2-type zinc fingers follow at residues 277–299 (YICA…RRTH), 305–327 (YVCT…YRTH), 333–354 (YDCK…QRMH), 360–382 (YQCK…YRIH), 388–410 (YQCN…QRLH), 416–438 (YKCK…HRIH), and 444–466 (YWCH…QRVH). Lysine 349 is covalently cross-linked (Glycyl lysine isopeptide (Lys-Gly) (interchain with G-Cter in SUMO2)).

The protein belongs to the krueppel C2H2-type zinc-finger protein family.

It is found in the nucleus. In terms of biological role, strong transcriptional activator. Plays an important role in spermatogenesis; essential for the progression of meiotic prophase I in spermatocytes. The protein is Zinc finger and SCAN domain-containing protein 21 (ZSCAN21) of Pan troglodytes (Chimpanzee).